Consider the following 295-residue polypeptide: Ribosomal RNA small subunit methyltransferase A (295 aa).

The S-adenosyl-L-methionine site is built by Asn25, Leu27, Gly52, Glu73, Asp98, and Asn120.

Belongs to the class I-like SAM-binding methyltransferase superfamily. rRNA adenine N(6)-methyltransferase family. RsmA subfamily.

Its subcellular location is the cytoplasm. The enzyme catalyses adenosine(1518)/adenosine(1519) in 16S rRNA + 4 S-adenosyl-L-methionine = N(6)-dimethyladenosine(1518)/N(6)-dimethyladenosine(1519) in 16S rRNA + 4 S-adenosyl-L-homocysteine + 4 H(+). Specifically dimethylates two adjacent adenosines (A1518 and A1519) in the loop of a conserved hairpin near the 3'-end of 16S rRNA in the 30S particle. May play a critical role in biogenesis of 30S subunits. The protein is Ribosomal RNA small subunit methyltransferase A of Desulfotalea psychrophila (strain LSv54 / DSM 12343).